Consider the following 69-residue polypeptide: UPF0291 protein CD630_10710 (69 aa).

The protein belongs to the UPF0291 family.

The protein localises to the cytoplasm. This is UPF0291 protein CD630_10710 from Clostridioides difficile (strain 630) (Peptoclostridium difficile).